The primary structure comprises 738 residues: Leucine-rich repeat flightless-interacting protein 1 (738 aa).

Threonine 2 carries the post-translational modification N-acetylthreonine. At serine 16 the chain carries Phosphoserine. The span at 40–65 (IRMKELERQQKEVEERPDKDFAEKGS) shows a compositional bias: basic and acidic residues. Positions 40 to 98 (IRMKELERQQKEVEERPDKDFAEKGSRNMPSLSAATLASLGGTSSRRGSGDTSISMDTE) are disordered. Low complexity predominate over residues 78 to 94 (SLGGTSSRRGSGDTSIS). Serine 83, serine 84, serine 88, and serine 92 each carry phosphoserine. Residues 94 to 194 (SMDTEASIRE…LRQREEMLEK (101 aa)) adopt a coiled-coil conformation. Lysine 249 participates in a covalent cross-link: Glycyl lysine isopeptide (Lys-Gly) (interchain with G-Cter in SUMO1). Basic and acidic residues-rich tracts occupy residues 253–262 (VEKVGQRETL) and 277–297 (DCVD…RPVE). The tract at residues 253-738 (VEKVGQRETL…SKSKEDCTMS (486 aa)) is disordered. Serine 302 bears the Phosphoserine mark. Positions 314–326 (EVQSQDQENTSIL) are enriched in polar residues. Residues 330–347 (EQIESHEVTNKSDSRDSN) show a composition bias toward basic and acidic residues. Phosphoserine occurs at positions 346 and 348. A compositionally biased stretch (polar residues) spans 371–380 (KNQSENSMDS). Composition is skewed to basic and acidic residues over residues 381–400 (QGKE…RPDH) and 467–476 (SERELAHEAA). The interval 479 to 580 (EEALTQSSQA…KNKKKKAAAP (102 aa)) is DNA-binding. Composition is skewed to polar residues over residues 483–495 (TQSS…NTVT) and 520–534 (TVQS…PGST). Positions 535–553 (DTKHTSPHAKERNKAKSEQ) are enriched in basic and acidic residues. Phosphoserine occurs at positions 551 and 560. The segment covering 563–577 (KKTKNKKKKNKKKKA) has biased composition (basic residues). Over residues 606–626 (RVQATDKKWAAETPELKEDPQ) the composition is skewed to basic and acidic residues. A phosphoserine mark is found at serine 675 and serine 701. Composition is skewed to basic and acidic residues over residues 691 to 703 (QADE…HSVD) and 720 to 738 (EQAR…CTMS).

Belongs to the LRRFIP family. In terms of assembly, homodimer. May also form higher oligomers. Interacts with FLII. Interacts with MYD88. Competes with FLII for MyD88-binding, even in the absence of LPS.

It is found in the nucleus. It localises to the cytoplasm. Functionally, transcriptional repressor which preferentially binds to the GC-rich consensus sequence (5'-AGCCCCCGGCG-3') and may regulate expression of TNF, EGFR and PDGFA. May control smooth muscle cells proliferation following artery injury through PDGFA repression. May also bind double-stranded RNA. Positively regulates Toll-like receptor (TLR) signaling in response to agonist probably by competing with the negative FLII regulator for MYD88-binding. The polypeptide is Leucine-rich repeat flightless-interacting protein 1 (Lrrfip1) (Rattus norvegicus (Rat)).